Reading from the N-terminus, the 132-residue chain is Pro-MCH 2 (132 aa).

An N-terminal signal peptide occupies residues 1–24 (MRDSVLSVIFALALFLECYTPSMA). Cysteine 120 and cysteine 129 are disulfide-bonded.

The protein belongs to the melanin-concentrating hormone family. In terms of tissue distribution, pituitary gland. Produced in neurons of lateral basal hypothalamus which project both to the brain and to the neural lobe of the pituitary gland from where MCH is released.

Its function is as follows. Plays a role in skin pigmentation by antagonizing the action of melanotropin alpha. Induces melanin concentration within the melanophores. May participate in the control of the hypothalamo-pituitary adrenal gland axis by inhibiting the release of ACTH. In Oncorhynchus keta (Chum salmon), this protein is Pro-MCH 2 (mch2).